Consider the following 371-residue polypeptide: Cytoplasmic tRNA 2-thiolation protein 1 (371 aa).

It belongs to the TtcA family. CTU1/NCS6/ATPBD3 subfamily.

It localises to the cytoplasm. It functions in the pathway tRNA modification; 5-methoxycarbonylmethyl-2-thiouridine-tRNA biosynthesis. Its function is as follows. Plays a central role in 2-thiolation of mcm(5)S(2)U at tRNA wobble positions of tRNA(Lys), tRNA(Glu) and tRNA(Gln). Directly binds tRNAs and probably acts by catalyzing adenylation of tRNAs, an intermediate required for 2-thiolation. It is unclear whether it acts as a sulfurtransferase that transfers sulfur from thiocarboxylated URM1 onto the uridine of tRNAs at wobble position. Prior mcm(5) tRNA modification by the elongator complex is required for 2-thiolation. May also be involved in protein urmylation. In Kluyveromyces lactis (strain ATCC 8585 / CBS 2359 / DSM 70799 / NBRC 1267 / NRRL Y-1140 / WM37) (Yeast), this protein is Cytoplasmic tRNA 2-thiolation protein 1.